Reading from the N-terminus, the 485-residue chain is Ribulose bisphosphate carboxylase large chain (485 aa).

Substrate contacts are provided by Asn124 and Thr174. Lys176 acts as the Proton acceptor in catalysis. Lys178 provides a ligand contact to substrate. Mg(2+)-binding residues include Lys202, Asp204, and Glu205. The residue at position 202 (Lys202) is an N6-carboxylysine. Residue His294 is the Proton acceptor of the active site. The substrate site is built by Arg295, His327, and Ser379.

The protein belongs to the RuBisCO large chain family. Type I subfamily. Heterohexadecamer of 8 large chains and 8 small chains. The cofactor is Mg(2+).

The enzyme catalyses 2 (2R)-3-phosphoglycerate + 2 H(+) = D-ribulose 1,5-bisphosphate + CO2 + H2O. It carries out the reaction D-ribulose 1,5-bisphosphate + O2 = 2-phosphoglycolate + (2R)-3-phosphoglycerate + 2 H(+). Functionally, ruBisCO catalyzes two reactions: the carboxylation of D-ribulose 1,5-bisphosphate, the primary event in carbon dioxide fixation, as well as the oxidative fragmentation of the pentose substrate. Both reactions occur simultaneously and in competition at the same active site. This Rhodopseudomonas palustris (strain ATCC BAA-98 / CGA009) protein is Ribulose bisphosphate carboxylase large chain.